An 875-amino-acid polypeptide reads, in one-letter code: Alanine--tRNA ligase (875 aa).

Positions 564, 568, 666, and 670 each coordinate Zn(2+).

Belongs to the class-II aminoacyl-tRNA synthetase family. Homotetramer. Zn(2+) serves as cofactor.

The protein resides in the cytoplasm. It catalyses the reaction tRNA(Ala) + L-alanine + ATP = L-alanyl-tRNA(Ala) + AMP + diphosphate. In terms of biological role, catalyzes the attachment of alanine to tRNA(Ala) in a two-step reaction: alanine is first activated by ATP to form Ala-AMP and then transferred to the acceptor end of tRNA(Ala). Also edits incorrectly charged Ser-tRNA(Ala) and Gly-tRNA(Ala) via its editing domain. The polypeptide is Alanine--tRNA ligase (Yersinia enterocolitica serotype O:8 / biotype 1B (strain NCTC 13174 / 8081)).